The following is a 258-amino-acid chain: Ubiquinone/menaquinone biosynthesis C-methyltransferase UbiE (258 aa).

S-adenosyl-L-methionine is bound by residues Thr-81, Asp-102, and 130-131; that span reads NA.

The protein belongs to the class I-like SAM-binding methyltransferase superfamily. MenG/UbiE family.

The enzyme catalyses a 2-demethylmenaquinol + S-adenosyl-L-methionine = a menaquinol + S-adenosyl-L-homocysteine + H(+). It carries out the reaction a 2-methoxy-6-(all-trans-polyprenyl)benzene-1,4-diol + S-adenosyl-L-methionine = a 5-methoxy-2-methyl-3-(all-trans-polyprenyl)benzene-1,4-diol + S-adenosyl-L-homocysteine + H(+). Its pathway is quinol/quinone metabolism; menaquinone biosynthesis; menaquinol from 1,4-dihydroxy-2-naphthoate: step 2/2. It participates in cofactor biosynthesis; ubiquinone biosynthesis. Methyltransferase required for the conversion of demethylmenaquinol (DMKH2) to menaquinol (MKH2) and the conversion of 2-polyprenyl-6-methoxy-1,4-benzoquinol (DDMQH2) to 2-polyprenyl-3-methyl-6-methoxy-1,4-benzoquinol (DMQH2). This Rhizobium rhizogenes (strain K84 / ATCC BAA-868) (Agrobacterium radiobacter) protein is Ubiquinone/menaquinone biosynthesis C-methyltransferase UbiE.